The primary structure comprises 81 residues: ATP synthase subunit c (81 aa).

Transmembrane regions (helical) follow at residues 5 to 25 (IAAGALIGGGLIMAGGAIGAG) and 57 to 77 (VGLVEAAYFINLAFMALFVFA).

The protein belongs to the ATPase C chain family. F-type ATPases have 2 components, F(1) - the catalytic core - and F(0) - the membrane proton channel. F(1) has five subunits: alpha(3), beta(3), gamma(1), delta(1), epsilon(1). F(0) has three main subunits: a(1), b(2) and c(10-14). The alpha and beta chains form an alternating ring which encloses part of the gamma chain. F(1) is attached to F(0) by a central stalk formed by the gamma and epsilon chains, while a peripheral stalk is formed by the delta and b chains.

The protein localises to the cell membrane. In terms of biological role, f(1)F(0) ATP synthase produces ATP from ADP in the presence of a proton or sodium gradient. F-type ATPases consist of two structural domains, F(1) containing the extramembraneous catalytic core and F(0) containing the membrane proton channel, linked together by a central stalk and a peripheral stalk. During catalysis, ATP synthesis in the catalytic domain of F(1) is coupled via a rotary mechanism of the central stalk subunits to proton translocation. Its function is as follows. Key component of the F(0) channel; it plays a direct role in translocation across the membrane. A homomeric c-ring of between 10-14 subunits forms the central stalk rotor element with the F(1) delta and epsilon subunits. The chain is ATP synthase subunit c from Mycobacterium marinum (strain ATCC BAA-535 / M).